The sequence spans 373 residues: Zinc finger protein CONSTANS-LIKE 10 (373 aa).

Zn(2+) contacts are provided by C5, C8, C28, H33, C48, C51, C71, and H76. Residues 5–47 (CDFCGEQRSMVYCRSDAACLCLSCDRNVHSANALSKRHSRTLV) form a B box-type 1; atypical zinc finger. The B box-type 2; atypical zinc-finger motif lies at 48 to 92 (CERCNAQPASVRCSDERVSLCQNCDWSGHDGKNSTTTSHHKRQTI). The interval 152-172 (PETSSAAQGMDHSSVPENSSM) is disordered. Residues 316–358 (RNNAVMRYKEKKKARKFDKRVRYVSRKERADVRRRVKGRFVKS) form the CCT domain.

Belongs to the CONSTANS family.

Its subcellular location is the nucleus. In Arabidopsis thaliana (Mouse-ear cress), this protein is Zinc finger protein CONSTANS-LIKE 10 (COL10).